A 31-amino-acid chain; its full sequence is Superoxide dismutase [Cu-Zn] (31 aa).

Belongs to the Cu-Zn superoxide dismutase family. Cu cation serves as cofactor. It depends on Zn(2+) as a cofactor.

The protein resides in the cytoplasm. It catalyses the reaction 2 superoxide + 2 H(+) = H2O2 + O2. In terms of biological role, destroys radicals which are normally produced within the cells and which are toxic to biological systems. The protein is Superoxide dismutase [Cu-Zn] of Striga hermonthica (Purple witchweed).